Consider the following 339-residue polypeptide: Heat-inducible transcription repressor HrcA (339 aa).

The protein belongs to the HrcA family.

Functionally, negative regulator of class I heat shock genes (grpE-dnaK-dnaJ and groELS operons). Prevents heat-shock induction of these operons. The sequence is that of Heat-inducible transcription repressor HrcA from Thiobacillus denitrificans (strain ATCC 25259 / T1).